A 439-amino-acid chain; its full sequence is tRNA modification GTPase MnmE (439 aa).

Arginine 24, glutamate 81, and lysine 121 together coordinate (6S)-5-formyl-5,6,7,8-tetrahydrofolate. Positions 218-363 (GFKVVIAGAP…LRDLIGRVVK (146 aa)) constitute a TrmE-type G domain. Asparagine 228 is a binding site for K(+). GTP-binding positions include 228 to 233 (NAGKSS), 247 to 253 (TDIAGTT), and 272 to 275 (DTAG). Serine 232 contributes to the Mg(2+) binding site. Threonine 247, isoleucine 249, and threonine 252 together coordinate K(+). Threonine 253 is a binding site for Mg(2+). Residue lysine 439 participates in (6S)-5-formyl-5,6,7,8-tetrahydrofolate binding.

This sequence belongs to the TRAFAC class TrmE-Era-EngA-EngB-Septin-like GTPase superfamily. TrmE GTPase family. As to quaternary structure, homodimer. Heterotetramer of two MnmE and two MnmG subunits. The cofactor is K(+).

It is found in the cytoplasm. In terms of biological role, exhibits a very high intrinsic GTPase hydrolysis rate. Involved in the addition of a carboxymethylaminomethyl (cmnm) group at the wobble position (U34) of certain tRNAs, forming tRNA-cmnm(5)s(2)U34. The polypeptide is tRNA modification GTPase MnmE (Rhizobium etli (strain CIAT 652)).